Here is a 545-residue protein sequence, read N- to C-terminus: DNA mismatch repair protein MutL (545 aa).

The interval 516-545 is disordered; that stretch reads GRRSGARGGGEARPRPQEESFPEAPLPREP.

The protein belongs to the DNA mismatch repair MutL/HexB family.

This protein is involved in the repair of mismatches in DNA. It is required for dam-dependent methyl-directed DNA mismatch repair. May act as a 'molecular matchmaker', a protein that promotes the formation of a stable complex between two or more DNA-binding proteins in an ATP-dependent manner without itself being part of a final effector complex. The sequence is that of DNA mismatch repair protein MutL from Thermus thermophilus (strain ATCC BAA-163 / DSM 7039 / HB27).